The following is a 181-amino-acid chain: Isopentenyl-diphosphate Delta-isomerase (181 aa).

Histidine 25 and histidine 32 together coordinate Mn(2+). The region spanning 30–164 (LLHLAFSCWL…PWAFSPWMVL (135 aa)) is the Nudix hydrolase domain. Cysteine 67 is an active-site residue. Histidine 69 serves as a coordination point for Mn(2+). Glutamate 87 lines the Mg(2+) pocket. Positions 114 and 116 each coordinate Mn(2+). Residue glutamate 116 is part of the active site.

This sequence belongs to the IPP isomerase type 1 family. Homodimer. Mg(2+) serves as cofactor. The cofactor is Mn(2+).

It localises to the cytoplasm. The catalysed reaction is isopentenyl diphosphate = dimethylallyl diphosphate. The protein operates within isoprenoid biosynthesis; dimethylallyl diphosphate biosynthesis; dimethylallyl diphosphate from isopentenyl diphosphate: step 1/1. In terms of biological role, catalyzes the 1,3-allylic rearrangement of the homoallylic substrate isopentenyl (IPP) to its highly electrophilic allylic isomer, dimethylallyl diphosphate (DMAPP). This is Isopentenyl-diphosphate Delta-isomerase from Citrobacter koseri (strain ATCC BAA-895 / CDC 4225-83 / SGSC4696).